Reading from the N-terminus, the 164-residue chain is Crossover junction endodeoxyribonuclease RuvC (164 aa).

Active-site residues include aspartate 7, glutamate 67, and aspartate 139. Mg(2+)-binding residues include aspartate 7, glutamate 67, and aspartate 139.

Belongs to the RuvC family. Homodimer which binds Holliday junction (HJ) DNA. The HJ becomes 2-fold symmetrical on binding to RuvC with unstacked arms; it has a different conformation from HJ DNA in complex with RuvA. In the full resolvosome a probable DNA-RuvA(4)-RuvB(12)-RuvC(2) complex forms which resolves the HJ. The cofactor is Mg(2+).

Its subcellular location is the cytoplasm. It catalyses the reaction Endonucleolytic cleavage at a junction such as a reciprocal single-stranded crossover between two homologous DNA duplexes (Holliday junction).. In terms of biological role, the RuvA-RuvB-RuvC complex processes Holliday junction (HJ) DNA during genetic recombination and DNA repair. Endonuclease that resolves HJ intermediates. Cleaves cruciform DNA by making single-stranded nicks across the HJ at symmetrical positions within the homologous arms, yielding a 5'-phosphate and a 3'-hydroxyl group; requires a central core of homology in the junction. The consensus cleavage sequence is 5'-(A/T)TT(C/G)-3'. Cleavage occurs on the 3'-side of the TT dinucleotide at the point of strand exchange. HJ branch migration catalyzed by RuvA-RuvB allows RuvC to scan DNA until it finds its consensus sequence, where it cleaves and resolves the cruciform DNA. This Geobacter sp. (strain M21) protein is Crossover junction endodeoxyribonuclease RuvC.